Reading from the N-terminus, the 428-residue chain is Tubby-like F-box protein 5 (428 aa).

The disordered stretch occupies residues 17-65 (IGSMSRRAADGRAGGGRGGSRHSWPVLWSEQQQPPQQQQLQRQEHQQQQ). Positions 47-65 (QQQPPQQQQLQRQEHQQQQ) are enriched in low complexity. The F-box domain maps to 65-117 (QGRWANLPPELLLDVIQRVEASEATWPARRQVVACAAVCRSWREVTKEVVKTL).

This sequence belongs to the TUB family. As to expression, ubiquitous.

This is Tubby-like F-box protein 5 (TULP5) from Oryza sativa subsp. japonica (Rice).